Reading from the N-terminus, the 194-residue chain is 7-methyl-GTP pyrophosphatase (194 aa).

Asp69 acts as the Proton acceptor in catalysis.

It belongs to the Maf family. YceF subfamily. The cofactor is a divalent metal cation.

It is found in the cytoplasm. It carries out the reaction N(7)-methyl-GTP + H2O = N(7)-methyl-GMP + diphosphate + H(+). In terms of biological role, nucleoside triphosphate pyrophosphatase that hydrolyzes 7-methyl-GTP (m(7)GTP). May have a dual role in cell division arrest and in preventing the incorporation of modified nucleotides into cellular nucleic acids. The sequence is that of 7-methyl-GTP pyrophosphatase (yceF1) from Salmonella paratyphi A (strain ATCC 9150 / SARB42).